A 97-amino-acid chain; its full sequence is HssA/B-like protein 48 (97 aa).

2 disordered regions span residues 1–20 (MTLFASISSISNPSTSSKSS) and 78–97 (GSGYPGNGGMGGGNGSCCGI).

Belongs to the hssA/B family.

The protein is HssA/B-like protein 48 (hssl48) of Dictyostelium discoideum (Social amoeba).